The sequence spans 405 residues: Tyrosine--tRNA ligase (405 aa).

A 'HIGH' region motif is present at residues 48-57 (PSRPDLHLGH). Residues 232 to 236 (KMSKS) carry the 'KMSKS' region motif. An ATP-binding site is contributed by lysine 235. In terms of domain architecture, S4 RNA-binding spans 339–400 (LPLVDLLTTL…AGKRKFFRIA (62 aa)).

The protein belongs to the class-I aminoacyl-tRNA synthetase family. TyrS type 2 subfamily. In terms of assembly, homodimer.

Its subcellular location is the cytoplasm. The enzyme catalyses tRNA(Tyr) + L-tyrosine + ATP = L-tyrosyl-tRNA(Tyr) + AMP + diphosphate + H(+). Its function is as follows. Catalyzes the attachment of tyrosine to tRNA(Tyr) in a two-step reaction: tyrosine is first activated by ATP to form Tyr-AMP and then transferred to the acceptor end of tRNA(Tyr). This chain is Tyrosine--tRNA ligase, found in Chlorobium luteolum (strain DSM 273 / BCRC 81028 / 2530) (Pelodictyon luteolum).